A 371-amino-acid polypeptide reads, in one-letter code: NADP-dependent oxidoreductase lnaE (371 aa).

NADP(+)-binding positions include 172–175 (DEIG), lysine 198, tyrosine 214, asparagine 237, 277–283 (YGTIAEQ), and 307–309 (FGL).

The protein belongs to the NADP-dependent oxidoreductase L4BD family.

The protein operates within secondary metabolite biosynthesis. Functionally, NADP-dependent oxidoreductase; part of the lna gene cluster that mediates the biosynthesis of diastereomeric piperazines. Lna and lnb clusters encode sets of enzymes that produce overlapping sets of previously undescribed metabolites such as piperazinomycin-like metabolites or morpholine. The lna and lnb biosynthetic pathways appear to be part of a signaling network that controls the formation of sclerotia, a resilient overwintering structure. One primary function of the non-canonical nonribosomal peptide synthetases lnaA and lnbA consists in the reduction of L-tyrosine. The presence in the clusters of tailoring enzymes such as the oxidoreductases lnaB, lnbB, lnaE or lnbE, as well as of the cytochrome P450 monooxygenases lnaC, lnaD, or lnbC, might explain formation of various diastereomeric piperazines. This Aspergillus flavus (strain ATCC 200026 / FGSC A1120 / IAM 13836 / NRRL 3357 / JCM 12722 / SRRC 167) protein is NADP-dependent oxidoreductase lnaE.